The chain runs to 152 residues: 3-dehydroquinate dehydratase (152 aa).

Tyr-22 acts as the Proton acceptor in catalysis. Residues Asn-73, His-79, and Asp-86 each coordinate substrate. His-99 acts as the Proton donor in catalysis. Residues 100–101 (LS) and Arg-110 each bind substrate.

The protein belongs to the type-II 3-dehydroquinase family. In terms of assembly, homododecamer.

The enzyme catalyses 3-dehydroquinate = 3-dehydroshikimate + H2O. It participates in metabolic intermediate biosynthesis; chorismate biosynthesis; chorismate from D-erythrose 4-phosphate and phosphoenolpyruvate: step 3/7. In terms of biological role, catalyzes a trans-dehydration via an enolate intermediate. In Gemmatimonas aurantiaca (strain DSM 14586 / JCM 11422 / NBRC 100505 / T-27), this protein is 3-dehydroquinate dehydratase.